We begin with the raw amino-acid sequence, 590 residues long: MCGIIGIVSSKEDKKIADKVISALKRLEYRGYDSVGVASLDNNKLEVRKAKGTVEEVISKKKVSEMSGYIFLGHTRWATHGPPTDYNAHPHVDCSGKIAVIHNGTIKNYKELREELQTLGHVFKSDTDTEIIPHLIEEFMKRGMDAYSAFRNSIKTLEGSYAVLAVIHGEKRIFFAKRDNPLVIGLGEKENYIASDIPAFLSYTKRILVIKDGELGFITTSNVFIEDKDGNPVDLSDRVRVIDWDVETASKEGYPHFMIKEIHESPKSIRDTVDSLISDLDLIDKIIAEMKSSGRIVVVGAGTSYHAGLYFSLLLSREGMNSFPLIASEYYNFKAKKDDLIFAISQSGETLDLLQAVRKFKEEGARIVSLTNVIESALARESNYKIYMRAGPEISVAATKTFITQLISLLFIYSRLRRDNTNKFRGADTEVERVISSVEGYAKLIGEELSKKTSIYYLGRGMSLPLAMEGALKIKEVAYVHAEAYPAGESKHGPISLVDKGFPIVAINDGEITDLLRNNVIEMKARGAKAYVISANKKISESDVEIYLDSIQFPALSISVVLQLIAYYASVSKGLNPDKPRNLAKTVTVE.

The active-site Nucleophile; for GATase activity is the Cys2. Residues 2 to 221 (CGIIGIVSSK…DGELGFITTS (220 aa)) enclose the Glutamine amidotransferase type-2 domain. SIS domains lie at 286 to 422 (IIAE…DNTN) and 445 to 580 (IGEE…PDKP). The active-site For Fru-6P isomerization activity is the Lys585.

As to quaternary structure, homodimer.

It is found in the cytoplasm. The catalysed reaction is D-fructose 6-phosphate + L-glutamine = D-glucosamine 6-phosphate + L-glutamate. Functionally, catalyzes the first step in hexosamine metabolism, converting fructose-6P into glucosamine-6P using glutamine as a nitrogen source. The sequence is that of Glutamine--fructose-6-phosphate aminotransferase [isomerizing] from Sulfolobus acidocaldarius (strain ATCC 33909 / DSM 639 / JCM 8929 / NBRC 15157 / NCIMB 11770).